Consider the following 118-residue polypeptide: Large ribosomal subunit protein bL20 (118 aa).

It belongs to the bacterial ribosomal protein bL20 family.

Functionally, binds directly to 23S ribosomal RNA and is necessary for the in vitro assembly process of the 50S ribosomal subunit. It is not involved in the protein synthesizing functions of that subunit. This Marinomonas sp. (strain MWYL1) protein is Large ribosomal subunit protein bL20.